A 229-amino-acid polypeptide reads, in one-letter code: Large ribosomal subunit protein uL1 (229 aa).

It belongs to the universal ribosomal protein uL1 family. Part of the 50S ribosomal subunit.

Binds directly to 23S rRNA. The L1 stalk is quite mobile in the ribosome, and is involved in E site tRNA release. Functionally, protein L1 is also a translational repressor protein, it controls the translation of the L11 operon by binding to its mRNA. The sequence is that of Large ribosomal subunit protein uL1 from Streptococcus pneumoniae (strain Taiwan19F-14).